We begin with the raw amino-acid sequence, 298 residues long: Probable 3-mercaptopyruvate sulfurtransferase (298 aa).

One can recognise a Rhodanese 1 domain in the interval 24-141 (NAQKTVLLDA…WKTEGLELET (118 aa)). Residues 142 to 175 (GEPRTPKPVVYEGAKLNKDLVASFDDIVKVIESP) are hinge. Position 164 is a phosphoserine (Ser164). Positions 176–292 (DAAGVHIVDA…YGKRANEDSS (117 aa)) constitute a Rhodanese 2 domain. Arg190 is a substrate binding site. The active-site Cysteine persulfide intermediate is Cys252.

Its subcellular location is the mitochondrion. The catalysed reaction is 2-oxo-3-sulfanylpropanoate + [thioredoxin]-dithiol = [thioredoxin]-disulfide + hydrogen sulfide + pyruvate + H(+). Required for formation of the 2-thio group of the 5-methoxycarbonylmethyl-2-thiouridine modified base in some tRNAs. The chain is Probable 3-mercaptopyruvate sulfurtransferase (tum1) from Schizosaccharomyces pombe (strain 972 / ATCC 24843) (Fission yeast).